A 237-amino-acid chain; its full sequence is tRNA (guanine-N(7)-)-methyltransferase (237 aa).

Positions 67, 92, 119, and 141 each coordinate S-adenosyl-L-methionine. Residue Asp141 is part of the active site. Residues Lys145, Asp177, and 214 to 217 (TRYE) each bind substrate.

The protein belongs to the class I-like SAM-binding methyltransferase superfamily. TrmB family.

It carries out the reaction guanosine(46) in tRNA + S-adenosyl-L-methionine = N(7)-methylguanosine(46) in tRNA + S-adenosyl-L-homocysteine. It participates in tRNA modification; N(7)-methylguanine-tRNA biosynthesis. Its function is as follows. Catalyzes the formation of N(7)-methylguanine at position 46 (m7G46) in tRNA. This Jannaschia sp. (strain CCS1) protein is tRNA (guanine-N(7)-)-methyltransferase.